A 98-amino-acid chain; its full sequence is UPF0235 protein azo3464 (98 aa).

It belongs to the UPF0235 family.

The protein is UPF0235 protein azo3464 of Azoarcus sp. (strain BH72).